A 225-amino-acid polypeptide reads, in one-letter code: Doublesex- and mab-3-related transcription factor C1 (225 aa).

Residues 1-12 (MQRPSGSREVRK) are compositionally biased toward basic and acidic residues. Disordered regions lie at residues 1–49 (MQRP…SHVH) and 179–216 (QTRH…LPSG). The segment covering 27 to 37 (RVKKHVVRRQK) has biased composition (basic residues).

The protein belongs to the DMRT family.

The chain is Doublesex- and mab-3-related transcription factor C1 (Dmrtc1) from Rattus norvegicus (Rat).